A 138-amino-acid chain; its full sequence is Large ribosomal subunit protein uL16 (138 aa).

The span at 1–16 shows a compositional bias: basic residues; the sequence is MLIPRRVKHRKQHHPS. The tract at residues 1–25 is disordered; that stretch reads MLIPRRVKHRKQHHPSRSGAAKGGT.

Belongs to the universal ribosomal protein uL16 family. Part of the 50S ribosomal subunit.

Functionally, binds 23S rRNA and is also seen to make contacts with the A and possibly P site tRNAs. This is Large ribosomal subunit protein uL16 from Rhodococcus jostii (strain RHA1).